The sequence spans 473 residues: ATP synthase subunit beta (473 aa).

153–160 (GGAGVGKT) provides a ligand contact to ATP.

The protein belongs to the ATPase alpha/beta chains family. F-type ATPases have 2 components, CF(1) - the catalytic core - and CF(0) - the membrane proton channel. CF(1) has five subunits: alpha(3), beta(3), gamma(1), delta(1), epsilon(1). CF(0) has three main subunits: a(1), b(2) and c(9-12). The alpha and beta chains form an alternating ring which encloses part of the gamma chain. CF(1) is attached to CF(0) by a central stalk formed by the gamma and epsilon chains, while a peripheral stalk is formed by the delta and b chains.

The protein localises to the cell inner membrane. It carries out the reaction ATP + H2O + 4 H(+)(in) = ADP + phosphate + 5 H(+)(out). Functionally, produces ATP from ADP in the presence of a proton gradient across the membrane. The catalytic sites are hosted primarily by the beta subunits. The protein is ATP synthase subunit beta of Rickettsia conorii (strain ATCC VR-613 / Malish 7).